Consider the following 297-residue polypeptide: HTH-type transcriptional regulator PerR (297 aa).

Residues 7–64 (APLNLLRAFEAAGRTGAFALAASELELSPSAISHAIRKLENLLDVRLFQRSTREITLT) enclose the HTH lysR-type domain. The segment at residues 24 to 44 (FALAASELELSPSAISHAIRK) is a DNA-binding region (H-T-H motif).

The protein belongs to the LysR transcriptional regulatory family.

In terms of biological role, apparent regulatory gene involved in peroxide resistance in stationary phase. In Escherichia coli (strain K12), this protein is HTH-type transcriptional regulator PerR (perR).